A 525-amino-acid chain; its full sequence is Bifunctional purine biosynthesis protein PurH (525 aa).

Residues 1–147 form the MGS-like domain; that stretch reads MTKIERALIS…KNWAHVAIVT (147 aa).

It belongs to the PurH family.

The enzyme catalyses (6R)-10-formyltetrahydrofolate + 5-amino-1-(5-phospho-beta-D-ribosyl)imidazole-4-carboxamide = 5-formamido-1-(5-phospho-D-ribosyl)imidazole-4-carboxamide + (6S)-5,6,7,8-tetrahydrofolate. It carries out the reaction IMP + H2O = 5-formamido-1-(5-phospho-D-ribosyl)imidazole-4-carboxamide. It functions in the pathway purine metabolism; IMP biosynthesis via de novo pathway; 5-formamido-1-(5-phospho-D-ribosyl)imidazole-4-carboxamide from 5-amino-1-(5-phospho-D-ribosyl)imidazole-4-carboxamide (10-formyl THF route): step 1/1. It participates in purine metabolism; IMP biosynthesis via de novo pathway; IMP from 5-formamido-1-(5-phospho-D-ribosyl)imidazole-4-carboxamide: step 1/1. In Chromobacterium violaceum (strain ATCC 12472 / DSM 30191 / JCM 1249 / CCUG 213 / NBRC 12614 / NCIMB 9131 / NCTC 9757 / MK), this protein is Bifunctional purine biosynthesis protein PurH.